We begin with the raw amino-acid sequence, 296 residues long: Developmental pluripotency-associated protein 4 (296 aa).

A compositionally biased stretch (basic and acidic residues) spans 1-13 (METAGDKKWSAEE). Residues 1 to 73 (METAGDKKWS…QTRRKVPIPP (73 aa)) form a disordered region. Positions 23 to 34 (SSQPSTAPAKAK) are enriched in low complexity. The span at 42–58 (KSETDNGCKPKEGKPQD) shows a compositional bias: basic and acidic residues.

As to quaternary structure, interacts with DPPA2. Interacts with PCGF1. In terms of tissue distribution, expressed in pluripotent embryonic cells, but not in differentiated somatic tissues.

The protein localises to the nucleus. Functionally, may be involved in the maintenance of active epigenetic status of target genes. May inhibit differentiation of embryonic stem (ES) cells into a primitive ectoderm lineage. The polypeptide is Developmental pluripotency-associated protein 4 (Dppa4) (Mus musculus (Mouse)).